The following is a 655-amino-acid chain: uncharacterized protein (655 aa).

A helical membrane pass occupies residues 5–25; sequence IIIIIFIVINFINIIISSITF. Disordered stretches follow at residues 337–363 and 484–525; these read NSDY…NNNN and DKIG…SDNS. The segment covering 515 to 524 has biased composition (low complexity); that stretch reads DNNSIGSSDN. A helical membrane pass occupies residues 588 to 608; that stretch reads ILAVTISAIGIICVALLLTVV.

It localises to the membrane. This is an uncharacterized protein from Dictyostelium discoideum (Social amoeba).